The following is a 664-amino-acid chain: ATP-dependent zinc metalloprotease FtsH (664 aa).

At M1 to W9 the chain is on the cytoplasmic side. Residues I10 to L30 traverse the membrane as a helical segment. Topologically, residues F31–P136 are extracellular. Residues F137–I157 form a helical membrane-spanning segment. Topologically, residues Y158–E664 are cytoplasmic. Position 229 to 236 (G229 to T236) interacts with ATP. Residue H451 coordinates Zn(2+). Residue E452 is part of the active site. Zn(2+) is bound by residues H455 and D529. The span at I639 to E649 shows a compositional bias: basic and acidic residues. The tract at residues I639 to E664 is disordered.

This sequence in the central section; belongs to the AAA ATPase family. It in the C-terminal section; belongs to the peptidase M41 family. Homohexamer. Requires Zn(2+) as cofactor.

The protein resides in the cell membrane. Acts as a processive, ATP-dependent zinc metallopeptidase for both cytoplasmic and membrane proteins. Plays a role in the quality control of integral membrane proteins. The chain is ATP-dependent zinc metalloprotease FtsH from Mycoplasmopsis synoviae (strain 53) (Mycoplasma synoviae).